The chain runs to 66 residues: Alpha-actitoxin-Ms11a-2 (66 aa).

The first 24 residues, 1–24 (MASKIFFVLAVFLVMSAVLPESFA), serve as a signal peptide directing secretion. Cystine bridges form between C26–C41, C33–C46, and C40–C61.

It is found in the secreted. Its subcellular location is the nematocyst. Functionally, alpha-toxins act on postsynaptic membranes, they bind to the nicotinic acetylcholine receptors (nAChR) and thus inhibit them. This toxin competes with alpha-bungarotoxin for binding to orthosteric sites on muscle-type T.carlifornicus (IC(50)=1080 nM) and human alpha-7/CHRNA7 nAChRs (IC(50)=14.13 uM). The protein is Alpha-actitoxin-Ms11a-2 of Metridium senile (Brown sea anemone).